A 155-amino-acid polypeptide reads, in one-letter code: Large ribosomal subunit protein uL11 (155 aa).

The protein belongs to the universal ribosomal protein uL11 family. In terms of assembly, part of the ribosomal stalk of the 50S ribosomal subunit. Interacts with L10 and the large rRNA to form the base of the stalk. L10 forms an elongated spine to which L12 dimers bind in a sequential fashion forming a multimeric L10(L12)X complex.

Its function is as follows. Forms part of the ribosomal stalk which helps the ribosome interact with GTP-bound translation factors. This chain is Large ribosomal subunit protein uL11, found in Picrophilus torridus (strain ATCC 700027 / DSM 9790 / JCM 10055 / NBRC 100828 / KAW 2/3).